A 349-amino-acid chain; its full sequence is Phenylalanine--tRNA ligase alpha subunit (349 aa).

Glutamate 259 contributes to the Mg(2+) binding site.

The protein belongs to the class-II aminoacyl-tRNA synthetase family. Phe-tRNA synthetase alpha subunit type 1 subfamily. Tetramer of two alpha and two beta subunits. Mg(2+) serves as cofactor.

It is found in the cytoplasm. It catalyses the reaction tRNA(Phe) + L-phenylalanine + ATP = L-phenylalanyl-tRNA(Phe) + AMP + diphosphate + H(+). In Lactobacillus johnsonii (strain CNCM I-12250 / La1 / NCC 533), this protein is Phenylalanine--tRNA ligase alpha subunit.